Here is a 198-residue protein sequence, read N- to C-terminus: Transmembrane protein 9B (198 aa).

An N-terminal signal peptide occupies residues methionine 1–alanine 33. A glycan (N-linked (GlcNAc...) asparagine) is linked at asparagine 60. Residues isoleucine 105 to valine 125 form a helical membrane-spanning segment. A phosphoserine mark is found at serine 142 and serine 189.

It belongs to the TMEM9 family. N-glycosylated.

It is found in the lysosome membrane. Its subcellular location is the early endosome membrane. Enhances production of pro-inflammatory cytokines induced by TNF, IL1B, and TLR ligands. Has a role in TNF activation of both the NF-kappaB and MAPK pathways. In Homo sapiens (Human), this protein is Transmembrane protein 9B (TMEM9B).